The primary structure comprises 410 residues: E3 ubiquitin-protein ligase ICP0 (410 aa).

Residues 46–85 (CPICLDVAATEAQTLPCMHKFCLDCIQRWTLTSTACPLCN) form an RING-type zinc finger. Residues 243 to 410 (TSESEAHSDS…IFIDLTQDDD (168 aa)) are disordered. A compositionally biased stretch (basic residues) spans 287–315 (APRRSPRRARRAAVLRREQRRTRCLRRGR). Low complexity-rich tracts occupy residues 329 to 340 (SSGEGSSAQHGA) and 348 to 399 (GSAN…PRSA).

Auto-ubiquitinated.

The catalysed reaction is S-ubiquitinyl-[E2 ubiquitin-conjugating enzyme]-L-cysteine + [acceptor protein]-L-lysine = [E2 ubiquitin-conjugating enzyme]-L-cysteine + N(6)-ubiquitinyl-[acceptor protein]-L-lysine.. Functionally, evades nuclear antiviral defenses triggered by dsDNA viruses. Acts during the initial stages of lytic infection and the reactivation of latent viral genome. Prevents the antiviral effect of nuclear bodies by degrading host PML and SP100. The polypeptide is E3 ubiquitin-protein ligase ICP0 (EP0) (Sus scrofa (Pig)).